Reading from the N-terminus, the 281-residue chain is NADPH-dependent 7-cyano-7-deazaguanine reductase (281 aa).

Residue 88 to 90 (IES) coordinates substrate. Residue 90-91 (SK) coordinates NADPH. The Thioimide intermediate role is filled by cysteine 189. Aspartate 196 (proton donor) is an active-site residue. Substrate is bound at residue 228 to 229 (HE). 257–258 (RG) serves as a coordination point for NADPH.

This sequence belongs to the GTP cyclohydrolase I family. QueF type 2 subfamily. In terms of assembly, homodimer.

Its subcellular location is the cytoplasm. It carries out the reaction 7-aminomethyl-7-carbaguanine + 2 NADP(+) = 7-cyano-7-deazaguanine + 2 NADPH + 3 H(+). Its pathway is tRNA modification; tRNA-queuosine biosynthesis. Functionally, catalyzes the NADPH-dependent reduction of 7-cyano-7-deazaguanine (preQ0) to 7-aminomethyl-7-deazaguanine (preQ1). The protein is NADPH-dependent 7-cyano-7-deazaguanine reductase of Yersinia pestis bv. Antiqua (strain Antiqua).